The primary structure comprises 382 residues: Proton extrusion protein PxcA (382 aa).

4 helical membrane passes run 156–176, 257–277, 305–325, and 340–360; these read TLISLKVLLLLILVPLLVQQV, AVKNVIADLAATVAFVVVCVF, IILFTDIFVGFHSPEGWTVLL, and FILLFIATFPVILATIFKYWI.

It belongs to the CemA family.

Its subcellular location is the cell inner membrane. Its function is as follows. Required for H(+) efflux immediately after light irradiation to form a rapid H(+) concentration gradient across the thylakoid membranes. Together with PxcL, contributes to transient H(+) uptake following dark to light transition. The chain is Proton extrusion protein PxcA from Synechococcus sp. (strain WH7803).